The following is a 205-amino-acid chain: uncharacterized protein (205 aa).

The next 3 helical transmembrane spans lie at 45 to 65, 119 to 139, and 144 to 164; these read LFFYFFANFFTNSFIVQFLVI, VFWLGLVVGPAAWIFFVVTAF, and FEWMIVALLGALMNMANLWGY.

Belongs to the TVP23 family.

The protein localises to the membrane. This is an uncharacterized protein from Caenorhabditis elegans.